Consider the following 370-residue polypeptide: Probable G-protein coupled receptor 85 (370 aa).

Residues 1–25 (MANYSHAADNILQNLSPLTAFLKLT) are Extracellular-facing. N-linked (GlcNAc...) asparagine glycosylation is present at Asn-3. The chain crosses the membrane as a helical span at residues 26-46 (SLGFIIGVSVVGNLLISILLV). Residues 47–57 (KDKTLHRAPYY) lie on the Cytoplasmic side of the membrane. The helical transmembrane segment at 58–78 (FLLDLCCSDILRSAICFPFVF) threads the bilayer. Residues 79–96 (NSVKNGSTWTYGTLTCKV) lie on the Extracellular side of the membrane. N-linked (GlcNAc...) asparagine glycosylation is present at Asn-83. Cysteines 94 and 172 form a disulfide. A helical transmembrane segment spans residues 97–117 (IAFLGVLSCFHTAFMLFCISV). Topologically, residues 118–137 (TRYLAIAHHRFYTKRLTFWT) are cytoplasmic. A helical membrane pass occupies residues 138–158 (CLAVICMVWTLSVAMAFPPVL). Topologically, residues 159–188 (DVGTYSFIREEDQCTFQHRSFRANDSLGFM) are extracellular. Asn-182 carries N-linked (GlcNAc...) asparagine glycosylation. Residues 189–209 (LLLALILLATQLVYLKLIFFV) traverse the membrane as a helical segment. Over 210–286 (HDRRKMKPVQ…FKMEKRISRM (77 aa)) the chain is Cytoplasmic. A helical transmembrane segment spans residues 287–307 (FYIMTFLFLTLWGPYLVACYW). Over 308 to 313 (RVFARG) the chain is Extracellular. A helical transmembrane segment spans residues 314-334 (PVVPGGFLTAAVWMSFAQAGI). The Cytoplasmic segment spans residues 335–370 (NPFVCIFSNRELRRCFSTTLLYCRKSRLPREPYCVI).

It belongs to the G-protein coupled receptor 1 family. As to quaternary structure, interacts with DLG4 and DLG3. Highly expressed in brain and testis. Lower levels in small intestine, placenta and spleen. In brain regions, detected in all regions tested, but somewhat lower levels in the corpus callosum, medulla and spinal cord.

The protein resides in the cell membrane. The protein localises to the endoplasmic reticulum. In terms of biological role, orphan receptor. The sequence is that of Probable G-protein coupled receptor 85 (GPR85) from Homo sapiens (Human).